The sequence spans 562 residues: Putative transport protein YPA_0617 (562 aa).

6 helical membrane-spanning segments follow: residues 8-28, 37-57, 66-86, 94-114, 118-138, and 158-178; these read LLNG…LCLG, LGNA…HFAI, FMLF…SIFF, MLAL…GKLF, IGLT…LVGA, and NLSL…ILGA. RCK C-terminal domains follow at residues 202-288 and 290-373; these read LDTD…SFRN and KEVF…KIGF. A run of 5 helical transmembrane segments spans residues 383–403, 406–426, 447–467, 475–495, and 541–561; these read LLAF…TFQF, FSFG…LGFL, FGLM…INSS, MLIS…VFGA, and IANV…PGIL.

Belongs to the AAE transporter (TC 2.A.81) family. YbjL subfamily.

Its subcellular location is the cell membrane. This is Putative transport protein YPA_0617 from Yersinia pestis bv. Antiqua (strain Antiqua).